A 1874-amino-acid polypeptide reads, in one-letter code: Protein TIC 214 (1874 aa).

The next 6 helical transmembrane spans lie at 18-38, 64-84, 87-107, 124-144, 172-192, and 221-241; these read IINSVVVVGLYYGFLTTFSIG, FITGQLMMFISIYYAPLHLAL, PHTITVLALPYLLFHFFWNNH, LSIQCVFLNNLIFQLFNYFIL, VGWLIGHILFMKWLGLVLVWI, and IFSILLFITCVYYLGRIPSPI. Disordered regions lie at residues 248–310 and 1567–1624; these read ETSK…EIRV and KTEC…NEED. Residues 255 to 268 are compositionally biased toward acidic residues; the sequence is GVESEEEGDVEIET. 2 stretches are compositionally biased toward basic and acidic residues: residues 298–310 and 1584–1601; these read DSNKIDETEEIRV and NQKEKETPADQEDLRSDA.

The protein belongs to the TIC214 family. As to quaternary structure, part of the Tic complex.

Its subcellular location is the plastid. It is found in the chloroplast inner membrane. Involved in protein precursor import into chloroplasts. May be part of an intermediate translocation complex acting as a protein-conducting channel at the inner envelope. The sequence is that of Protein TIC 214 from Coffea arabica (Arabian coffee).